The chain runs to 746 residues: MCASPSTAPGFFNPRPQSGAELSAFDIGLSRSMGLGVPPHSAWHEPPASLGGHLHAASAGPGTTTGSVATGGGGTTPSSVASQQSAVIKQDLSCPSLNQAGSGHHPGIKEDLSSSLPSANGGSAGGHHSGSGSGSGSGVNPGHGSDMLPLIKGHGQDMLTSIKGQPTGCGSTTPSSQANSSHSQSSNSGSQIDSKQNIECVVCGDKSSGKHYGQFTCEGCKSFFKRSVRRNLTYSCRGSRNCPIDQHHRNQCQYCRLKKCLKMGMRREAVQRGRVPPTQPGLAGMHGQYQIANGDPMGIAGFNGHSYLSSYISLLLRAEPYPTSRYGQCMQPNNIMGIDNICELAARLLFSAVEWAKNIPFFPELQVTDQVALLRLVWSELFVLNASQCSMPLHVAPLLAAAGLHASPMAADRVVAFMDHIRIFQEQVEKLKALHVDSAEYSCLKAIVLFTTGKLLDILYKDVPALLTKVSALLGKGSTASNDDVLAVVRDHLDELNRQEQESQAQQQAPLHLAAFMNCVAGVEAAVQQAEQAQVPTSSASASVSAPLVPSAGSAFSSCQAKSAGSEMDLLASLYAQAQATPPSSGGGDASGHNNSSGLGASLPTQSQSGSSSRNLTASPLSTSLATAPAPASASAPAPVPTSSVAQVPVPAPVPVTSSASSSSLGGGAYQTPSAAAAAAAMFHYQTPPRAAFGSAFDMFHHSTPFGVGVGHAHALAHSSGSGSASFGSPSYRYSPYSLAGSRWQL.

The interval 38–191 is disordered; the sequence is PPHSAWHEPP…HSQSSNSGSQ (154 aa). Residues 56 to 68 are compositionally biased toward low complexity; it reads AASAGPGTTTGSV. Residues 83-101 show a composition bias toward polar residues; it reads QQSAVIKQDLSCPSLNQAG. Residues 122–141 show a composition bias toward gly residues; it reads GSAGGHHSGSGSGSGSGVNP. The span at 158-170 shows a compositional bias: polar residues; sequence MLTSIKGQPTGCG. The segment covering 171-191 has biased composition (low complexity); that stretch reads STTPSSQANSSHSQSSNSGSQ. Positions 197–272 form a DNA-binding region, nuclear receptor; the sequence is NIECVVCGDK…MGMRREAVQR (76 aa). 2 consecutive NR C4-type zinc fingers follow at residues 200-220 and 236-260; these read CVVC…CEGC and CRGS…LKKC. The region spanning 307 to 556 is the NR LBD domain; the sequence is YLSSYISLLL…PLVPSAGSAF (250 aa). The tract at residues 579–645 is disordered; that stretch reads QATPPSSGGG…APAPVPTSSV (67 aa). Over residues 592–605 the composition is skewed to polar residues; that stretch reads GHNNSSGLGASLPT. Residues 606–645 show a composition bias toward low complexity; the sequence is QSQSGSSSRNLTASPLSTSLATAPAPASASAPAPVPTSSV.

The protein belongs to the nuclear hormone receptor family. NR2 subfamily. Expressed in several embryonic tissues; dorsal vessel, oenocyte and fat body. CNS expression is dynamic and confined to temporally restricted subsections of the NB lineage; expressed in many NB and GMCs, but only a small number of neurons.

It localises to the nucleus. Receptor that is required in photoreceptors R1, R3, R4 and R6 during eye development; generation of the ganglion mother cell-2 (GMC-2) fate in the nb7-3 lineage, coinciding with the transition in the expression of HB to KR in the neuroblasts (NBs). This is Steroid receptor seven-up, isoform A (svp) from Drosophila melanogaster (Fruit fly).